A 302-amino-acid chain; its full sequence is Transcription factor bHLH7 (302 aa).

Residues 124–154 (QPMSQPAPPMPHQQSTIRPRVRARRGQATDP) are disordered. The bHLH domain occupies 150–199 (QATDPHSIAERLRRERIAERIRSLQELVPTVNKTDRAAMIDEIVDYVKFL).

In terms of assembly, homodimer. In terms of tissue distribution, expressed constitutively in roots, leaves, stems and flowers.

The protein localises to the nucleus. This is Transcription factor bHLH7 (BHLH7) from Arabidopsis thaliana (Mouse-ear cress).